The primary structure comprises 538 residues: Bifunctional purine biosynthesis protein PurH (538 aa).

The 151-residue stretch at 8–158 (IPAPDKVEIK…KNHAYVTTLT (151 aa)) folds into the MGS-like domain.

This sequence belongs to the PurH family.

The catalysed reaction is (6R)-10-formyltetrahydrofolate + 5-amino-1-(5-phospho-beta-D-ribosyl)imidazole-4-carboxamide = 5-formamido-1-(5-phospho-D-ribosyl)imidazole-4-carboxamide + (6S)-5,6,7,8-tetrahydrofolate. The enzyme catalyses IMP + H2O = 5-formamido-1-(5-phospho-D-ribosyl)imidazole-4-carboxamide. Its pathway is purine metabolism; IMP biosynthesis via de novo pathway; 5-formamido-1-(5-phospho-D-ribosyl)imidazole-4-carboxamide from 5-amino-1-(5-phospho-D-ribosyl)imidazole-4-carboxamide (10-formyl THF route): step 1/1. The protein operates within purine metabolism; IMP biosynthesis via de novo pathway; IMP from 5-formamido-1-(5-phospho-D-ribosyl)imidazole-4-carboxamide: step 1/1. This chain is Bifunctional purine biosynthesis protein PurH, found in Rhizobium johnstonii (strain DSM 114642 / LMG 32736 / 3841) (Rhizobium leguminosarum bv. viciae).